The primary structure comprises 329 residues: GTPase Obg (329 aa).

The Obg domain maps to 1–159; that stretch reads MQFIDQARIT…WLLHLELKLL (159 aa). One can recognise an OBG-type G domain in the interval 160-328; sequence AEVGIIGLPN…LLNKIWSKLE (169 aa). ATP contacts are provided by residues 166 to 173, 191 to 195, 213 to 216, 280 to 283, and 309 to 311; these read GLPNAGKS, FTTLI, DIPG, NKKE, and SAI. Residues Ser-173 and Thr-193 each contribute to the Mg(2+) site.

The protein belongs to the TRAFAC class OBG-HflX-like GTPase superfamily. OBG GTPase family. As to quaternary structure, monomer. Mg(2+) is required as a cofactor.

It is found in the cytoplasm. In terms of biological role, an essential GTPase which binds GTP, GDP and possibly (p)ppGpp with moderate affinity, with high nucleotide exchange rates and a fairly low GTP hydrolysis rate. Plays a role in control of the cell cycle, stress response, ribosome biogenesis and in those bacteria that undergo differentiation, in morphogenesis control. The chain is GTPase Obg from Prochlorococcus marinus (strain SARG / CCMP1375 / SS120).